A 1320-amino-acid polypeptide reads, in one-letter code: Immunoglobulin superfamily member 1 (1320 aa).

A signal peptide spans 1-18 (MMLRTFTLLLLCIWLNRG). The Extracellular segment spans residues 19–504 (MTSMAAVESQ…LPWNSILNEA (486 aa)). Ig-like C2-type domains follow at residues 29–113 (PELW…KILE), 115–212 (EAPG…KLVV), 224–308 (HPGP…IWVT), 312–399 (PKTW…ATYN), and 401–482 (VELI…HRSE). Asn-44 carries an N-linked (GlcNAc...) asparagine glycan. The cysteines at positions 49 and 97 are disulfide-linked. Asn-329, Asn-365, and Asn-372 each carry an N-linked (GlcNAc...) asparagine glycan. 2 disulfides stabilise this stretch: Cys-334/Cys-383 and Cys-423/Cys-466. A helical membrane pass occupies residues 505–525 (IRVSLTVQFLSLLLLVLWLQW). The Cytoplasmic portion of the chain corresponds to 526–534 (KCRRLRLRE). The helical transmembrane segment at 535-555 (AWLLGTAQGVAMLVILIALLC) threads the bilayer. Residues 556 to 1320 (CGLCNGALTE…GVSVEQTVPI (765 aa)) are Extracellular-facing. Ig-like C2-type domains follow at residues 572–665 (PTPK…VGTD), 662–756 (VGTD…ELVI), 761–853 (PKPF…LIVT), 857–942 (PKPT…YLST), 949–1044 (TDTF…ELIV), 1049–1134 (PKPS…NHSN), and 1145–1226 (PKPS…EPSD). 9 N-linked (GlcNAc...) asparagine glycosylation sites follow: Asn-591, Asn-731, Asn-782, Asn-830, Asn-874, Asn-923, Asn-970, Asn-1011, and Asn-1066. Cys-783 and Cys-833 form a disulfide bridge. Cys-879 and Cys-926 are disulfide-bonded. A disulfide bridge links Cys-1071 with Cys-1118. 2 N-linked (GlcNAc...) asparagine glycosylation sites follow: Asn-1131 and Asn-1207. Residues Cys-1167 and Cys-1210 are joined by a disulfide bond.

In terms of assembly, interacts with INHA; the interaction is not confirmed by standard receptor binding assays. Interacts with ACVR1B; the interaction appears to be ligand-dependent as it is diminished by inhibin B and activin A. Interacts with ACVR2A, ACVR2B, ACVRL1 and BMPR1B. Interacts with HECTD1. In terms of tissue distribution, expressed in pituitary gland, testis and liver. Isoform 2 is expressed pituitary gland and testis.

It is found in the membrane. The protein localises to the secreted. Its function is as follows. Seems to be a coreceptor in inhibin signaling, but seems not to be a high-affinity inhibin receptor. Antagonizes activin A signaling in the presence or absence of inhibin B. Necessary to mediate a specific antagonistic effect of inhibin B on activin-stimulated transcription. The sequence is that of Immunoglobulin superfamily member 1 (Igsf1) from Rattus norvegicus (Rat).